Reading from the N-terminus, the 1051-residue chain is DNA-directed RNA polymerase subunit beta (1051 aa).

This sequence belongs to the RNA polymerase beta chain family. As to quaternary structure, in plastids the minimal PEP RNA polymerase catalytic core is composed of four subunits: alpha, beta, beta', and beta''. When a (nuclear-encoded) sigma factor is associated with the core the holoenzyme is formed, which can initiate transcription (Potential).

Its subcellular location is the plastid. The protein localises to the apicoplast. The enzyme catalyses RNA(n) + a ribonucleoside 5'-triphosphate = RNA(n+1) + diphosphate. Functionally, DNA-dependent RNA polymerase catalyzes the transcription of DNA into RNA using the four ribonucleoside triphosphates as substrates. The sequence is that of DNA-directed RNA polymerase subunit beta (rpoB) from Toxoplasma gondii.